The primary structure comprises 198 residues: Protein GrpE (198 aa).

The protein belongs to the GrpE family. Homodimer.

The protein resides in the cytoplasm. Participates actively in the response to hyperosmotic and heat shock by preventing the aggregation of stress-denatured proteins, in association with DnaK and GrpE. It is the nucleotide exchange factor for DnaK and may function as a thermosensor. Unfolded proteins bind initially to DnaJ; upon interaction with the DnaJ-bound protein, DnaK hydrolyzes its bound ATP, resulting in the formation of a stable complex. GrpE releases ADP from DnaK; ATP binding to DnaK triggers the release of the substrate protein, thus completing the reaction cycle. Several rounds of ATP-dependent interactions between DnaJ, DnaK and GrpE are required for fully efficient folding. The polypeptide is Protein GrpE (Baumannia cicadellinicola subsp. Homalodisca coagulata).